Consider the following 307-residue polypeptide: MKFQNALETIGNTPVVKINNLFNSDHEIWIKLEKSNPGGSIKDRIALAMIEDAEAKGLLNKDSTIIEPTSGNTGIGLALVAAVKGYKLILVMPESMSIERRKIMEAYGAEFVLTPREKGMKGAIEKANELAEETPNSWIPRQFDNPANVKIHVETTAQEILQDFPEGLDYVITGVGTGGHITGIAKALKEKYPNLKVIAVEPELSPVLSGGSPAPHPLQGLGAGFVPSILDITLLDGVITVGKDEAYEYAINAAKKEGLFCGSFHRSRLSRYRKTFTGNTAWSKNSLPLITTPEKGIFLLRDSSKIL.

Lys42 is subject to N6-(pyridoxal phosphate)lysine. Pyridoxal 5'-phosphate contacts are provided by residues Asn72, 176-180 (GTGGH), and Ser263.

It belongs to the cysteine synthase/cystathionine beta-synthase family. Requires pyridoxal 5'-phosphate as cofactor.

The enzyme catalyses O-acetyl-L-serine + hydrogen sulfide = L-cysteine + acetate. Its pathway is amino-acid biosynthesis; L-cysteine biosynthesis; L-cysteine from L-serine: step 2/2. The protein is Cysteine synthase (cysK) of Flavobacterium sp. (strain K3-15 / DSM ID92-509).